The following is a 352-amino-acid chain: Histidinol-phosphate aminotransferase (352 aa).

Position 211 is an N6-(pyridoxal phosphate)lysine (K211).

It belongs to the class-II pyridoxal-phosphate-dependent aminotransferase family. Histidinol-phosphate aminotransferase subfamily. As to quaternary structure, homodimer. Pyridoxal 5'-phosphate serves as cofactor.

It carries out the reaction L-histidinol phosphate + 2-oxoglutarate = 3-(imidazol-4-yl)-2-oxopropyl phosphate + L-glutamate. Its pathway is amino-acid biosynthesis; L-histidine biosynthesis; L-histidine from 5-phospho-alpha-D-ribose 1-diphosphate: step 7/9. The protein is Histidinol-phosphate aminotransferase of Haemophilus influenzae (strain PittGG).